A 227-amino-acid chain; its full sequence is Uracil-DNA glycosylase (227 aa).

Aspartate 65 functions as the Proton acceptor in the catalytic mechanism.

The protein belongs to the uracil-DNA glycosylase (UDG) superfamily. UNG family.

It localises to the cytoplasm. The enzyme catalyses Hydrolyzes single-stranded DNA or mismatched double-stranded DNA and polynucleotides, releasing free uracil.. Functionally, excises uracil residues from the DNA which can arise as a result of misincorporation of dUMP residues by DNA polymerase or due to deamination of cytosine. This Bacillus velezensis (strain DSM 23117 / BGSC 10A6 / LMG 26770 / FZB42) (Bacillus amyloliquefaciens subsp. plantarum) protein is Uracil-DNA glycosylase.